The following is a 1059-amino-acid chain: Zinc finger protein 865 (1059 aa).

Disordered stretches follow at residues 1 to 24, 58 to 142, and 161 to 206; these read MEAN…EDGV, LPCA…DAAF, and NLKR…CDPT. The segment covering 8 to 21 has biased composition (gly residues); that stretch reads SGAGGGGSSGIGGE. Positions 61-78 are enriched in pro residues; the sequence is APGPPPQPPPQPPPPQYD. Residues 93–119 are compositionally biased toward low complexity; sequence SSSSSSSSSSSSSSSSSSSSSSSSSQA. Composition is skewed to pro residues over residues 124 to 137 and 183 to 198; these read PPLP…PPPL and APGP…PGPP. C2H2-type zinc fingers lie at residues 224 to 246 and 252 to 274; these read FPCG…MLVH and YECG…RRCH. Residues 275-342 are disordered; the sequence is KDVPPAAGGP…PAGVGVPPPA (68 aa). The span at 281–296 shows a compositional bias: pro residues; it reads AGGPPQPGPHLPPLGL. 2 stretches are compositionally biased toward low complexity: residues 297-316 and 324-337; these read PAPA…SSGP and APSA…AGVG. 4 consecutive C2H2-type zinc fingers follow at residues 350–372, 378–400, 407–429, and 441–463; these read FACP…QIIH, FSCS…VKTH, LPCG…QAAH, and YPCD…KAAH. A disordered region spans residues 461–503; the sequence is AAHAPPAAAAEAPKDGAASAPQPPPTFPPGPYLLPPDPPTTDS. Over residues 463–480 the composition is skewed to low complexity; sequence HAPPAAAAEAPKDGAASA. Residues 481–499 are compositionally biased toward pro residues; the sequence is PQPPPTFPPGPYLLPPDPP. 5 consecutive C2H2-type zinc fingers follow at residues 550-572, 578-600, 606-628, 669-691, and 697-719; these read FCCG…ERIH, HQCP…HVVH, YKCE…RQVH, YACS…KEVH, and YGCD…KLVH. Residues 726 to 747 form a disordered region; that stretch reads LLPPAPGGLQPPDGSSGTDAAS. 9 consecutive C2H2-type zinc fingers follow at residues 792–814, 820–842, 848–870, 876–898, 904–926, 932–954, 960–982, 989–1011, and 1017–1039; these read FSCA…KYVH, LGCG…RRSH, FRCP…QRCH, YRCG…RVVH, FKCG…RRLH, QRCS…QRLH, YRCE…QRAH, LRCP…LAAH, and FRCS…RLAH. Residue Lys-802 forms a Glycyl lysine isopeptide (Lys-Gly) (interchain with G-Cter in SUMO2) linkage. Residue Lys-1040 forms a Glycyl lysine isopeptide (Lys-Gly) (interchain with G-Cter in SUMO2) linkage.

The protein belongs to the krueppel C2H2-type zinc-finger protein family.

It localises to the nucleus. Functionally, may be involved in transcriptional regulation. This Homo sapiens (Human) protein is Zinc finger protein 865 (ZNF865).